A 289-amino-acid chain; its full sequence is MIADPDQLMQKAAKKAQGTGGFALFGGGNKYDEASELFLDAANGYRLQKQGSAAGYAFEKAAEMQLKTDDKDDAASTYVEAFKSYRREKPSEAARVLQIAIELFTRRGNFRRAANYKMDLGDIFEQELQDTKAALGAYEDAGEWYSSDQADALANKAYLKAADLAGLCGEYSLAIRKFEQVARASVQNNLLKWSVKDYLLKAGLCYMANGDEIATRRALEHFLEIDPSFASTREYQLLKDLQDTIEASDANMFADKVFTYDQLSKLDSWKTTILLKIKSSIQEAEDDLT.

Position 76 is a phosphoserine (S76).

It belongs to the SNAP family.

The protein resides in the membrane. Required for vesicular transport between the endoplasmic reticulum and the Golgi apparatus. This chain is Probable vesicular-fusion protein sec17 homolog (sec17), found in Schizosaccharomyces pombe (strain 972 / ATCC 24843) (Fission yeast).